A 127-amino-acid polypeptide reads, in one-letter code: Large ribosomal subunit protein bL12 (127 aa).

This sequence belongs to the bacterial ribosomal protein bL12 family. In terms of assembly, homodimer. Part of the ribosomal stalk of the 50S ribosomal subunit. Forms a multimeric L10(L12)X complex, where L10 forms an elongated spine to which 2 to 4 L12 dimers bind in a sequential fashion. Binds GTP-bound translation factors.

Its function is as follows. Forms part of the ribosomal stalk which helps the ribosome interact with GTP-bound translation factors. Is thus essential for accurate translation. The chain is Large ribosomal subunit protein bL12 from Streptomyces virginiae (Streptomyces cinnamonensis).